The primary structure comprises 951 residues: Leucine-rich repeat-containing G-protein coupled receptor 4 (951 aa).

The first 24 residues, 1–24, serve as a signal peptide directing secretion; sequence MPGPLGLLCFLALGLLGSAGPSGA. The LRRNT domain occupies 25–57; the sequence is APPLCAAPCSCDGDRRVDCSGKGLTAVPEGLSA. At 25 to 544 the chain is on the extracellular side; sequence APPLCAAPCS…LLGSWMIRLT (520 aa). 2 disulfides stabilise this stretch: C29-C35 and C33-C43. LRR repeat units follow at residues 58–79, 82–103, 106–127, 130–151, 154–177, 178–199, 202–223, 226–247, 249–270, and 273–294; these read FTQALDISMNNITQLPEDAFKN, FLEELQLAGNDLSFIHPKALSG, ELKVLTLQNNQLKTVPSEAIRG, ALQSLRLDANHITSVPEDSFEG, QLRHLWLDDNSLTEVPVHPLSNLP, TLQALTLALNKISSIPDFAFTN, SLVVLHLHNNKIRSLSQHCFDG, NLETLDLNYNNLGEFPQAIKAL, SLKELGFHSNSISVIPDGAFDG, and LLRTIHLYDNPLSFVGNSAFHN. N68 carries N-linked (GlcNAc...) asparagine glycosylation. An N-linked (GlcNAc...) asparagine glycan is attached at N199. 2 N-linked (GlcNAc...) asparagine glycosylation sites follow: N294 and N314. 5 LRR repeats span residues 320–341, 344–365, 366–387, 390–411, and 414–435; these read HLESLTLTGTKISSIPNNLCQE, MLRTLDLSYNNIRDLPSFNGCH, ALEEISLQRNQIYQIKEGTFQG, SLRILDLSRNLIHEIHSRAFAT, and PITNLDVSFNELTSFPTEGLNG. C339 and C364 are oxidised to a cystine. 2 disulfide bridges follow: C470/C522 and C471/C476. N505 carries N-linked (GlcNAc...) asparagine glycosylation. Residues 545 to 565 form a helical membrane-spanning segment; sequence VWFIFLVALFFNLLVILTTFA. Over 566–575 the chain is Cytoplasmic; that stretch reads SCTSLPSSKL. The helical transmembrane segment at 576 to 596 threads the bilayer; that stretch reads FIGLISVSNLFMGIYTGILTF. The Extracellular portion of the chain corresponds to 597–620; it reads LDAVSWGRFAEFGIWWETGSGCKV. A disulfide bridge connects residues C618 and C693. A helical membrane pass occupies residues 621–641; it reads AGFLAVFSSESAIFLLMLATV. Residues 642-661 lie on the Cytoplasmic side of the membrane; that stretch reads ERSLSAKDIMKNGKSNHLKQ. A helical membrane pass occupies residues 662–682; it reads FRVAALLAFLGATVAGCFPLF. The Extracellular segment spans residues 683–703; that stretch reads HRGEYSASPLCLPFPTGETPS. A helical membrane pass occupies residues 704–724; sequence LGFTVTLVLLNSLAFLLMAVI. Residues 725-756 lie on the Cytoplasmic side of the membrane; it reads YTKLYCNLEKEDLSENSQSSMIKHVAWLIFTN. Residues 757–777 traverse the membrane as a helical segment; that stretch reads CIFFCPVAFFSFAPLITAISI. The Extracellular portion of the chain corresponds to 778-783; it reads SPEIMK. A helical transmembrane segment spans residues 784-804; that stretch reads SVTLIFFPLPACLNPVLYVFF. Residues 805-951 lie on the Cytoplasmic side of the membrane; sequence NPKFKEDWKL…YAYNLPRVKD (147 aa). Residue S920 is modified to Phosphoserine.

The protein belongs to the G-protein coupled receptor 1 family. As to expression, expressed in multiple steroidogenic tissues: placenta, ovary, testis and adrenal. Expressed also in spinal cord, thyroid, stomach, trachea, heart, pancreas, kidney, prostate and spleen.

The protein resides in the cell membrane. Functionally, receptor for R-spondins that potentiates the canonical Wnt signaling pathway and is involved in the formation of various organs. Upon binding to R-spondins (RSPO1, RSPO2, RSPO3 or RSPO4), associates with phosphorylated LRP6 and frizzled receptors that are activated by extracellular Wnt receptors, triggering the canonical Wnt signaling pathway to increase expression of target genes. In contrast to classical G-protein coupled receptors, does not activate heterotrimeric G-proteins to transduce the signal. Its function as activator of the Wnt signaling pathway is required for the development of various organs, including liver, kidney, intestine, bone, reproductive tract and eye. May also act as a receptor for norrin (NDP), such results however require additional confirmation in vivo. Required during spermatogenesis to activate the Wnt signaling pathway in peritubular myoid cells. Required for the maintenance of intestinal stem cells and Paneth cell differentiation in postnatal intestinal crypts. Acts as a regulator of bone formation and remodeling. Involved in kidney development; required for maintaining the ureteric bud in an undifferentiated state. Involved in the development of the anterior segment of the eye. Required during erythropoiesis. Also acts as a negative regulator of innate immunity by inhibiting TLR2/TLR4 associated pattern-recognition and pro-inflammatory cytokine production. Plays an important role in regulating the circadian rhythms of plasma lipids, partially through regulating the rhythmic expression of MTTP. Required for proper development of GnRH neurons (gonadotropin-releasing hormone expressing neurons) that control the release of reproductive hormones from the pituitary gland. This Homo sapiens (Human) protein is Leucine-rich repeat-containing G-protein coupled receptor 4 (LGR4).